The following is a 272-amino-acid chain: MENFEVIKALFLGFVEGLTEFLPISSTGHLILFGHIIDFHSDGGRVFEVVIQLGAILAVCWLYRQKIINLIKGFFSGDVESRHFAISVLIAFSPAVIIGVLAVDFIKSVLFSPIVVAIALIVGALIIFWVESKQFEHKTDDATKITFKQALLVGLAQCVAMIPGTSRSGATIVGGMFAGLSRKAATEFSFFLAMPTMLGAATFDLIKNADVLTSDNMVNIGVGFVAAFIAALLVVKALVLFVERHTLRVFAWYRIVLGVIILIAAMFFNLSA.

8 consecutive transmembrane segments (helical) span residues Phe4 to Ile24, Gly43 to Tyr63, Ile86 to Ile106, Val109 to Trp129, Ile145 to Thr165, Thr186 to Ile206, Val222 to Val242, and Val249 to Asn269.

It belongs to the UppP family.

Its subcellular location is the cell inner membrane. It carries out the reaction di-trans,octa-cis-undecaprenyl diphosphate + H2O = di-trans,octa-cis-undecaprenyl phosphate + phosphate + H(+). Functionally, catalyzes the dephosphorylation of undecaprenyl diphosphate (UPP). Confers resistance to bacitracin. This Acinetobacter baumannii (strain AB307-0294) protein is Undecaprenyl-diphosphatase.